A 160-amino-acid polypeptide reads, in one-letter code: Globin-like protein (160 aa).

The Globin domain maps to 2–152; that stretch reads SMTRQEIQDL…FNAECQVHLK (151 aa). Residue H101 participates in heme binding.

Belongs to the globin family.

The protein resides in the cytoplasm. In terms of biological role, may be a globin and may play a role in oxygen transport. The polypeptide is Globin-like protein (glb-1) (Caenorhabditis briggsae).